The primary structure comprises 1270 residues: Nuclear exosome regulator NRDE2 (1270 aa).

2 disordered regions span residues 1 to 22 and 119 to 209; these read MFRAYGNNGLKNPERISGENPD and SVKS…HTLM. Residues 119-135 show a composition bias toward polar residues; that stretch reads SVKSLNGCQDPPETSQQ. Residues 164–184 show a composition bias toward basic residues; sequence QRSRSREKKRRKKERRRKRSS. Positions 192–204 are enriched in basic and acidic residues; that stretch reads RSRDRSSRARDTS.

Belongs to the NRDE2 family. In terms of assembly, interacts with nrde-3.

The protein localises to the nucleus. The protein resides in the nucleus speckle. It localises to the nucleolus. Its function is as follows. Protein of the nuclear speckles that regulates RNA exosomal degradation. Involved in short interfering RNAs-mediated silencing in nuclei. Functions with nrde-3 in the nuclear RNA-mediated gene silencing (RNAi) pathway to regulate gene expression via inhibition of RNA polymerases I and II during the elongation phase of transcription. Required for exogenous RNAi-induced H3K27 methylation. The chain is Nuclear exosome regulator NRDE2 (nrde-2) from Caenorhabditis elegans.